A 94-amino-acid polypeptide reads, in one-letter code: Progonadoliberin-3 (94 aa).

Positions 1-23 (MEWKGRVLVQLLMLVCVLEVSLC) are cleaved as a signal peptide. Gln24 bears the Pyrrolidone carboxylic acid mark. A Glycine amide modification is found at Gly33.

Belongs to the GnRH family.

The protein resides in the secreted. Functionally, stimulates the secretion of gonadotropins. This Rutilus rutilus (Roach) protein is Progonadoliberin-3 (gnrh3).